A 427-amino-acid chain; its full sequence is Four-jointed box protein 1 (427 aa).

Residues 1–18 form the signal peptide; it reads MRALSANLFAVLLMCALA. Residues N81, N244, and N270 are each glycosylated (N-linked (GlcNAc...) asparagine).

Its subcellular location is the secreted. Its function is as follows. May act as an inhibitor of dendrite extension and branching. This is Four-jointed box protein 1 (fjx1) from Xiphophorus maculatus (Southern platyfish).